Consider the following 68-residue polypeptide: Frenatin-3 (68 aa).

Positions 1–22 are cleaved as a signal peptide; it reads MHFLKKSIFLVLFLGLVSLSIC. Positions 23 to 46 are excised as a propeptide; that stretch reads EKEKREDQNEEEVDENEEESEEKR. The segment at 26–47 is disordered; it reads KREDQNEEEVDENEEESEEKRG. A compositionally biased stretch (acidic residues) spans 30-42; sequence QNEEEVDENEEES.

The protein belongs to the frog skin active peptide (FSAP) family. Frenatin subfamily. In terms of tissue distribution, expressed by the granular skin glands.

It is found in the secreted. Functionally, antimicrobial peptide with activity against both Gram-positive and Gram-negative bacteria. Antibacterial activities have been tested against Bacillus cereus (MIC=12.5 ug/ml), Escherichia coli (MIC=50 ug/ml), Leuconostoc mesenteroides (MIC=25 ug/ml), Micrococcus luteus (MIC=1.5 ug/ml), Pastewella haemolytica (MIC=0.8 ug/ml), Staphylococcus aureus (MIC&lt;l00 ug/ml), Streptococcus faecalis (MIC&lt;150 ug/ml) and Streptococcus uberis (MIC=50 ug/ml). Strongly inhibits the formation of NO by neuronal nitric oxide synthase (nNOS) at micromolar concentrations. Acts by a non-competitive mechanism, probably by binding to calcium/calmodulin and as a consequence blocking calmodulin attachment to nNOS. The polypeptide is Frenatin-3 (Nyctimystes infrafrenatus (White-lipped tree frog)).